The primary structure comprises 361 residues: Thermostable alkaline protease (361 aa).

The first 24 residues, 1-24, serve as a signal peptide directing secretion; that stretch reads MRQSLKVMVLSTVALLFMANPAAA. Residues 25-93 constitute a propeptide that is removed on maturation; the sequence is SEEKKEYLIV…IEKNAEVTIS (69 aa). Gln-94 is a binding site for Ca(2+). The 264-residue stretch at 97 to 360 folds into the Peptidase S8 domain; that stretch reads PWGISFINTQ…NGLVHAGRAT (264 aa). Asp-124 functions as the Charge relay system in the catalytic mechanism. Asp-132 provides a ligand contact to Ca(2+). Catalysis depends on His-154, which acts as the Charge relay system. Residues Leu-165, Asn-167, Ile-169, Val-171, Ala-255, Tyr-257, and Val-260 each coordinate Ca(2+). The active-site Charge relay system is the Ser-307.

It belongs to the peptidase S8 family. Requires Ca(2+) as cofactor.

Its subcellular location is the secreted. In terms of biological role, shows keratinolytic activity. This Halalkalibacterium halodurans (strain ATCC BAA-125 / DSM 18197 / FERM 7344 / JCM 9153 / C-125) (Bacillus halodurans) protein is Thermostable alkaline protease.